We begin with the raw amino-acid sequence, 251 residues long: Small ribosomal subunit protein uS2 (251 aa).

The residue at position 2 (Ser-2) is an N-acetylserine. Residues 213–251 (QVAEEATAAADEDVKEEVAEEQTEAADWAEGNTEEVASW) form a disordered region. The span at 222–236 (ADEDVKEEVAEEQTE) shows a compositional bias: acidic residues.

This sequence belongs to the universal ribosomal protein uS2 family. As to quaternary structure, component of the small ribosomal subunit. Mature ribosomes consist of a small (40S) and a large (60S) subunit. The 40S subunit contains about 33 different proteins and 1 molecule of RNA (18S). The 60S subunit contains about 49 different proteins and 3 molecules of RNA (25S, 5.8S and 5S). Interacts with RPS21.

It localises to the cytoplasm. In terms of biological role, required for the assembly and/or stability of the 40S ribosomal subunit. Required for the processing of the 20S rRNA-precursor to mature 18S rRNA in a late step of the maturation of 40S ribosomal subunits. This chain is Small ribosomal subunit protein uS2, found in Lachancea thermotolerans (strain ATCC 56472 / CBS 6340 / NRRL Y-8284) (Yeast).